Consider the following 324-residue polypeptide: Beta-ketoacyl-[acyl-carrier-protein] synthase III (324 aa).

Active-site residues include Cys-113 and His-251. The interval 252-256 (QANKR) is ACP-binding. Asn-281 is an active-site residue.

The protein belongs to the thiolase-like superfamily. FabH family. In terms of assembly, homodimer.

The protein resides in the cytoplasm. It carries out the reaction malonyl-[ACP] + acetyl-CoA + H(+) = 3-oxobutanoyl-[ACP] + CO2 + CoA. The protein operates within lipid metabolism; fatty acid biosynthesis. Catalyzes the condensation reaction of fatty acid synthesis by the addition to an acyl acceptor of two carbons from malonyl-ACP. Catalyzes the first condensation reaction which initiates fatty acid synthesis and may therefore play a role in governing the total rate of fatty acid production. Possesses both acetoacetyl-ACP synthase and acetyl transacylase activities. Its substrate specificity determines the biosynthesis of branched-chain and/or straight-chain of fatty acids. This chain is Beta-ketoacyl-[acyl-carrier-protein] synthase III, found in Bartonella bacilliformis (strain ATCC 35685 / KC583 / Herrer 020/F12,63).